Here is a 388-residue protein sequence, read N- to C-terminus: Succinate--CoA ligase [ADP-forming] subunit beta (388 aa).

One can recognise an ATP-grasp domain in the interval 9-236 (KKLFAEHGVP…VAAVDPLEQK (228 aa)). Residues lysine 45, 52–54 (GRG), glutamate 91, serine 94, and glutamate 99 each bind ATP. Positions 191 and 205 each coordinate Mg(2+). Substrate contacts are provided by residues asparagine 256 and 318-320 (GIT).

Belongs to the succinate/malate CoA ligase beta subunit family. In terms of assembly, heterotetramer of two alpha and two beta subunits. It depends on Mg(2+) as a cofactor.

It catalyses the reaction succinate + ATP + CoA = succinyl-CoA + ADP + phosphate. The catalysed reaction is GTP + succinate + CoA = succinyl-CoA + GDP + phosphate. It functions in the pathway carbohydrate metabolism; tricarboxylic acid cycle; succinate from succinyl-CoA (ligase route): step 1/1. Succinyl-CoA synthetase functions in the citric acid cycle (TCA), coupling the hydrolysis of succinyl-CoA to the synthesis of either ATP or GTP and thus represents the only step of substrate-level phosphorylation in the TCA. The beta subunit provides nucleotide specificity of the enzyme and binds the substrate succinate, while the binding sites for coenzyme A and phosphate are found in the alpha subunit. In Frankia casuarinae (strain DSM 45818 / CECT 9043 / HFP020203 / CcI3), this protein is Succinate--CoA ligase [ADP-forming] subunit beta.